A 39-amino-acid chain; its full sequence is Cytochrome b559 subunit beta (39 aa).

Residues 14–30 (WLAVHGLAIPTVFFLGS) form a helical membrane-spanning segment. Histidine 18 contacts heme.

It belongs to the PsbE/PsbF family. In terms of assembly, heterodimer of an alpha subunit and a beta subunit. PSII is composed of 1 copy each of membrane proteins PsbA, PsbB, PsbC, PsbD, PsbE, PsbF, PsbH, PsbI, PsbJ, PsbK, PsbL, PsbM, PsbT, PsbX, PsbY, PsbZ, Psb30/Ycf12, at least 3 peripheral proteins of the oxygen-evolving complex and a large number of cofactors. It forms dimeric complexes. Requires heme b as cofactor.

Its subcellular location is the plastid membrane. This b-type cytochrome is tightly associated with the reaction center of photosystem II (PSII). PSII is a light-driven water:plastoquinone oxidoreductase that uses light energy to abstract electrons from H(2)O, generating O(2) and a proton gradient subsequently used for ATP formation. It consists of a core antenna complex that captures photons, and an electron transfer chain that converts photonic excitation into a charge separation. This chain is Cytochrome b559 subunit beta, found in Cuscuta gronovii (Common dodder).